The following is a 63-amino-acid chain: Large ribosomal subunit protein uL29 (63 aa).

This sequence belongs to the universal ribosomal protein uL29 family.

The polypeptide is Large ribosomal subunit protein uL29 (Bordetella avium (strain 197N)).